A 217-amino-acid chain; its full sequence is ATP-dependent Clp protease proteolytic subunit (217 aa).

The active-site Nucleophile is S120. H145 is a catalytic residue.

It belongs to the peptidase S14 family. As to quaternary structure, fourteen ClpP subunits assemble into 2 heptameric rings which stack back to back to give a disk-like structure with a central cavity, resembling the structure of eukaryotic proteasomes.

It is found in the cytoplasm. It carries out the reaction Hydrolysis of proteins to small peptides in the presence of ATP and magnesium. alpha-casein is the usual test substrate. In the absence of ATP, only oligopeptides shorter than five residues are hydrolyzed (such as succinyl-Leu-Tyr-|-NHMec, and Leu-Tyr-Leu-|-Tyr-Trp, in which cleavage of the -Tyr-|-Leu- and -Tyr-|-Trp bonds also occurs).. Cleaves peptides in various proteins in a process that requires ATP hydrolysis. Has a chymotrypsin-like activity. Plays a major role in the degradation of misfolded proteins. The protein is ATP-dependent Clp protease proteolytic subunit of Ralstonia nicotianae (strain ATCC BAA-1114 / GMI1000) (Ralstonia solanacearum).